We begin with the raw amino-acid sequence, 485 residues long: NADH-quinone oxidoreductase subunit N (485 aa).

14 consecutive transmembrane segments (helical) span residues 8 to 28 (LIAL…MLSI), 35 to 55 (FINT…LYFV), 75 to 95 (LYIG…YSWL), 104 to 124 (EFYL…CANH), 125 to 145 (LASL…LIGY), 159 to 179 (YMLL…LLYA), 203 to 223 (ILSG…LVPF), 235 to 255 (PAPV…AVVI), 271 to 291 (TVLT…ALTQ), 297 to 317 (LLGY…VAVQ), 326 to 346 (VGIY…VVSL), 383 to 403 (LAGI…VLGV), 406 to 426 (ELWW…YYYL), and 455 to 475 (MVVL…QPLI).

The protein belongs to the complex I subunit 2 family. NDH-1 is composed of 13 different subunits. Subunits NuoA, H, J, K, L, M, N constitute the membrane sector of the complex.

It localises to the cell inner membrane. It catalyses the reaction a quinone + NADH + 5 H(+)(in) = a quinol + NAD(+) + 4 H(+)(out). In terms of biological role, NDH-1 shuttles electrons from NADH, via FMN and iron-sulfur (Fe-S) centers, to quinones in the respiratory chain. The immediate electron acceptor for the enzyme in this species is believed to be ubiquinone. Couples the redox reaction to proton translocation (for every two electrons transferred, four hydrogen ions are translocated across the cytoplasmic membrane), and thus conserves the redox energy in a proton gradient. The protein is NADH-quinone oxidoreductase subunit N of Photorhabdus laumondii subsp. laumondii (strain DSM 15139 / CIP 105565 / TT01) (Photorhabdus luminescens subsp. laumondii).